A 281-amino-acid polypeptide reads, in one-letter code: Putative outer membrane protein BBA52 (281 aa).

A disordered region spans residues 162 to 281 (KRISDNQSKL…FFDSLEDQFI (120 aa)). Residues 179–196 (NKSVGSKFSKNSRPSKSP) show a composition bias toward polar residues. The segment covering 219–249 (EFLDDPSQESDELEREYQDDELESEDPDDGE) has biased composition (acidic residues). The span at 250-262 (REYQDDRESRDDT) shows a compositional bias: basic and acidic residues. The span at 263–281 (FNEDQSEDEFFDSLEDQFI) shows a compositional bias: acidic residues.

Its subcellular location is the cell outer membrane. In Borreliella burgdorferi (strain ATCC 35210 / DSM 4680 / CIP 102532 / B31) (Borrelia burgdorferi), this protein is Putative outer membrane protein BBA52.